The chain runs to 313 residues: MIEIKVGSRESELARWQARWVIQALEKAWPGLSCRLVTLKTKGDKILDVALARIGDKGLFTKELELALLDGAIDLAVHSMKDMPTTLPEGLVIGAIGPREDPADVLVSPEGYTLATLPIKARVGTSSLRRKAQLAYARPDLELVDLRGNVPTRLAKMERDGLTAIVLAAAGLKRLNHGQVLGEPIPYHICLPAVGQGAIGVEIRAGDRRVAELVAAINHPPTAAAVRAERAYLRALEGGCQVPIAALATVEDTALVLQGMVASLDGREMLRDIASGSTRDPEAAGRELARKLLARGAGEILQEVKAQSGKYQG.

An S-(dipyrrolylmethanemethyl)cysteine modification is found at C240.

The protein belongs to the HMBS family. In terms of assembly, monomer. Dipyrromethane serves as cofactor.

The catalysed reaction is 4 porphobilinogen + H2O = hydroxymethylbilane + 4 NH4(+). It functions in the pathway porphyrin-containing compound metabolism; protoporphyrin-IX biosynthesis; coproporphyrinogen-III from 5-aminolevulinate: step 2/4. Functionally, tetrapolymerization of the monopyrrole PBG into the hydroxymethylbilane pre-uroporphyrinogen in several discrete steps. The protein is Porphobilinogen deaminase of Moorella thermoacetica (strain ATCC 39073 / JCM 9320).